The sequence spans 86 residues: Large ribosomal subunit protein bL27 (86 aa).

This sequence belongs to the bacterial ribosomal protein bL27 family.

This chain is Large ribosomal subunit protein bL27, found in Xanthomonas axonopodis pv. citri (strain 306).